The chain runs to 54 residues: ATP synthase F(0) complex subunit 8 (54 aa).

The helical transmembrane segment at 8–24 (PWFSIMLLTWFTFSLLI) threads the bilayer.

The protein belongs to the ATPase protein 8 family. In terms of assembly, component of the ATP synthase complex composed at least of ATP5F1A/subunit alpha, ATP5F1B/subunit beta, ATP5MC1/subunit c (homooctomer), MT-ATP6/subunit a, MT-ATP8/subunit 8, ATP5ME/subunit e, ATP5MF/subunit f, ATP5MG/subunit g, ATP5MK/subunit k, ATP5MJ/subunit j, ATP5F1C/subunit gamma, ATP5F1D/subunit delta, ATP5F1E/subunit epsilon, ATP5PF/subunit F6, ATP5PB/subunit b, ATP5PD/subunit d, ATP5PO/subunit OSCP. ATP synthase complex consists of a soluble F(1) head domain (subunits alpha(3) and beta(3)) - the catalytic core - and a membrane F(0) domain - the membrane proton channel (subunits c, a, 8, e, f, g, k and j). These two domains are linked by a central stalk (subunits gamma, delta, and epsilon) rotating inside the F1 region and a stationary peripheral stalk (subunits F6, b, d, and OSCP).

The protein localises to the mitochondrion membrane. Its function is as follows. Subunit 8, of the mitochondrial membrane ATP synthase complex (F(1)F(0) ATP synthase or Complex V) that produces ATP from ADP in the presence of a proton gradient across the membrane which is generated by electron transport complexes of the respiratory chain. ATP synthase complex consist of a soluble F(1) head domain - the catalytic core - and a membrane F(1) domain - the membrane proton channel. These two domains are linked by a central stalk rotating inside the F(1) region and a stationary peripheral stalk. During catalysis, ATP synthesis in the catalytic domain of F(1) is coupled via a rotary mechanism of the central stalk subunits to proton translocation. In vivo, can only synthesize ATP although its ATP hydrolase activity can be activated artificially in vitro. Part of the complex F(0) domain. The polypeptide is ATP synthase F(0) complex subunit 8 (Gallus gallus (Chicken)).